Consider the following 135-residue polypeptide: Small ribosomal subunit protein uS9 (135 aa).

Over residues 108–118 (VGDPRRTEPHK) the composition is skewed to basic and acidic residues. The segment at 108-135 (VGDPRRTEPHKPNRSTKGPRAKRQKSYR) is disordered. A compositionally biased stretch (basic residues) spans 119-135 (PNRSTKGPRAKRQKSYR).

This sequence belongs to the universal ribosomal protein uS9 family.

The protein is Small ribosomal subunit protein uS9 (rps9) of Pyrococcus horikoshii (strain ATCC 700860 / DSM 12428 / JCM 9974 / NBRC 100139 / OT-3).